A 465-amino-acid polypeptide reads, in one-letter code: Putative subtilisin-like proteinase 1 (465 aa).

Positions 1–17 (MILAIISLSVVICREVS) are cleaved as a signal peptide. Residues 19–90 (YIVMFDQDPS…VKMVVKDSPV (72 aa)) enclose the Inhibitor I9 domain. In terms of domain architecture, Peptidase S8 spans 115–447 (PWGLARVGGS…PSLFNANKKK (333 aa)). Active-site charge relay system residues include D148 and H180. A disulfide bridge connects residues C329 and C360. S386 acts as the Charge relay system in catalysis.

This sequence belongs to the peptidase S8 family.

The protein localises to the secreted. It localises to the extracellular space. In terms of biological role, may be involved in the degradation of proteins for nutrient acquisition or possess a regulatory function by proteolytic activation of proproteins. The protein is Putative subtilisin-like proteinase 1 (SPL1) of Encephalitozoon cuniculi (strain GB-M1) (Microsporidian parasite).